The primary structure comprises 270 residues: Phosphatidylglycerol--prolipoprotein diacylglyceryl transferase (270 aa).

The next 7 helical transmembrane spans lie at 14–34, 60–80, 103–123, 133–153, 181–201, 209–229, and 235–255; these read VAFT…ILAL, YFFW…IAIY, FVGI…LATI, LWQL…FGRI, PSQL…LFFY, GELI…CEFF, and GIGF…LMFF. R152 serves as a coordination point for a 1,2-diacyl-sn-glycero-3-phospho-(1'-sn-glycerol).

Belongs to the Lgt family.

Its subcellular location is the cell inner membrane. The catalysed reaction is L-cysteinyl-[prolipoprotein] + a 1,2-diacyl-sn-glycero-3-phospho-(1'-sn-glycerol) = an S-1,2-diacyl-sn-glyceryl-L-cysteinyl-[prolipoprotein] + sn-glycerol 1-phosphate + H(+). It participates in protein modification; lipoprotein biosynthesis (diacylglyceryl transfer). In terms of biological role, catalyzes the transfer of the diacylglyceryl group from phosphatidylglycerol to the sulfhydryl group of the N-terminal cysteine of a prolipoprotein, the first step in the formation of mature lipoproteins. In Campylobacter curvus (strain 525.92), this protein is Phosphatidylglycerol--prolipoprotein diacylglyceryl transferase.